The primary structure comprises 140 residues: Small ribosomal subunit protein uS19 (140 aa).

The protein belongs to the universal ribosomal protein uS19 family.

Its function is as follows. Protein S19 forms a complex with S13 that binds strongly to the 16S ribosomal RNA. The polypeptide is Small ribosomal subunit protein uS19 (rps19) (Sulfurisphaera tokodaii (strain DSM 16993 / JCM 10545 / NBRC 100140 / 7) (Sulfolobus tokodaii)).